Here is a 44-residue protein sequence, read N- to C-terminus: Protein PsbN (44 aa).

A helical membrane pass occupies residues 6 to 26 (FFFTIFLWCLLLSVTGYSVYV).

Belongs to the PsbN family.

It is found in the plastid. The protein localises to the chloroplast thylakoid membrane. Its function is as follows. May play a role in photosystem I and II biogenesis. This Oltmannsiellopsis viridis (Marine flagellate) protein is Protein PsbN.